The following is a 514-amino-acid chain: Putative exoglucanase type C (514 aa).

The N-terminal stretch at 1–17 is a signal peptide; that stretch reads MYRIVATASALIAAARA. The catalytic stretch occupies residues 18–439; that stretch reads QQVCSLNTET…RDVPNSKVSF (422 aa). Catalysis depends on E229, which acts as the Nucleophile. E234 serves as the catalytic Proton donor. N-linked (GlcNAc...) asparagine glycosylation is present at N287. Over residues 408–424 the composition is skewed to polar residues; it reads STKVGSQRGSCATTSGK. Disordered regions lie at residues 408 to 433 and 448 to 485; these read STKV…RDVP and GSTY…QWGQ. A linker region spans residues 440 to 482; the sequence is SNIKFGPIGSTYKSDGTTPNPPASSSTTGSSTPTNPPAGSVDQ. Positions 462–479 are enriched in low complexity; sequence ASSSTTGSSTPTNPPAGS. Residues 478 to 514 enclose the CBM1 domain; sequence GSVDQWGQCGGQNYSGPTTCKSPFTCKKINDFYSQCQ. Intrachain disulfides connect C486-C503 and C497-C513. The N-linked (GlcNAc...) asparagine glycan is linked to N490.

It belongs to the glycosyl hydrolase 7 (cellulase C) family.

The enzyme catalyses Hydrolysis of (1-&gt;4)-beta-D-glucosidic linkages in cellulose and cellotetraose, releasing cellobiose from the non-reducing ends of the chains.. The sequence is that of Putative exoglucanase type C from Fusarium oxysporum (Fusarium vascular wilt).